The chain runs to 130 residues: Arsenate reductase 2.2 (130 aa).

One can recognise a Rhodanese domain in the interval 18 to 119; it reads RDPRIAVVDV…WELSGRPVCR (102 aa). Cysteine 70 serves as the catalytic Cysteine persulfide intermediate.

The enzyme catalyses [glutaredoxin]-dithiol + arsenate + glutathione + H(+) = glutathionyl-S-S-[glutaredoxin] + arsenite + H2O. In terms of biological role, possesses arsenate reductase activity in vitro. Catalyzes the reduction of arsenate [As(V)] to arsenite [As(III)]. May play a role in arsenic retention in roots. Functionally, possesses phosphatase activity towards p-nitrophenyl phosphate in vitro. The sequence is that of Arsenate reductase 2.2 (ACR2.2) from Oryza sativa subsp. japonica (Rice).